Reading from the N-terminus, the 132-residue chain is Fluoride-specific ion channel FluC 2 (132 aa).

The next 4 helical transmembrane spans lie at 5-25 (VAVFIGGAIGSLLRYAVNLLG), 34-54 (TFIENTSGSLLLGLLTGFFAA), 59-79 (PLVQLCLGTGFCGGYTTMSAF), and 95-115 (VLYLMASLACGVCFAFLGIVI). Na(+)-binding residues include G71 and T74.

This sequence belongs to the fluoride channel Fluc/FEX (TC 1.A.43) family.

The protein localises to the cell membrane. It catalyses the reaction fluoride(in) = fluoride(out). Na(+) is not transported, but it plays an essential structural role and its presence is essential for fluoride channel function. Fluoride-specific ion channel. Important for reducing fluoride concentration in the cell, thus reducing its toxicity. This is Fluoride-specific ion channel FluC 2 from Bacillus licheniformis (strain ATCC 14580 / DSM 13 / JCM 2505 / CCUG 7422 / NBRC 12200 / NCIMB 9375 / NCTC 10341 / NRRL NRS-1264 / Gibson 46).